Consider the following 123-residue polypeptide: Galanin peptides (123 aa).

The first 19 residues, 1–19, serve as a signal peptide directing secretion; sequence MPRGSVLLLASLLLAAALS. Residues 20 to 30 constitute a propeptide that is removed on maturation; that stretch reads ATLGLGSPVKE. Positions 53–66 are enriched in basic and acidic residues; that stretch reads SFQDKHGLAGKREL. The interval 53–79 is disordered; that stretch reads SFQDKHGLAGKRELEPEDEARPGSFDR. An Alanine amide modification is found at Ala61. Ser116 is modified (phosphoserine).

This sequence belongs to the galanin family.

It is found in the secreted. Endocrine hormone of the central and peripheral nervous systems that binds and activates the G protein-coupled receptors GALR1, GALR2, and GALR3. This small neuropeptide may regulate diverse physiologic functions including contraction of smooth muscle of the gastrointestinal and genitourinary tract, growth hormone and insulin release and adrenal secretion. The sequence is that of Galanin peptides (GAL) from Bos taurus (Bovine).